Reading from the N-terminus, the 598-residue chain is Probable translation initiation factor IF-2 (598 aa).

The tr-type G domain maps to leucine 3–lysine 225. The G1 stretch occupies residues glycine 12–threonine 19. Position 12–19 (glycine 12–threonine 19) interacts with GTP. A G2 region spans residues glycine 37–histidine 41. Positions aspartate 76–glycine 79 are G3. Residues aspartate 76 to histidine 80 and asparagine 130 to aspartate 133 each bind GTP. The interval asparagine 130–aspartate 133 is G4. A G5 region spans residues serine 200 to methionine 202.

This sequence belongs to the TRAFAC class translation factor GTPase superfamily. Classic translation factor GTPase family. IF-2 subfamily.

Its function is as follows. Function in general translation initiation by promoting the binding of the formylmethionine-tRNA to ribosomes. Seems to function along with eIF-2. This chain is Probable translation initiation factor IF-2, found in Methanococcus maripaludis (strain C5 / ATCC BAA-1333).